We begin with the raw amino-acid sequence, 122 residues long: UPF0102 protein VCM66_0538 (122 aa).

Belongs to the UPF0102 family.

The polypeptide is UPF0102 protein VCM66_0538 (Vibrio cholerae serotype O1 (strain M66-2)).